A 132-amino-acid polypeptide reads, in one-letter code: UPF0299 membrane protein YohJ (132 aa).

The next 4 membrane-spanning stretches (helical) occupy residues 7–27, 31–51, 63–83, and 93–113; these read IIWQYLRAFVLIYACLYAGIF, LLPVTIPGSIIGMLILFVLLA, GCYVLIRYMALLFVPIGVGVM, and FGPVVVSCAISTLVVFLVMSW.

The protein belongs to the UPF0299 family.

The protein localises to the cell inner membrane. This chain is UPF0299 membrane protein YohJ, found in Shigella dysenteriae serotype 1 (strain Sd197).